We begin with the raw amino-acid sequence, 317 residues long: DNA-directed RNA polymerase subunit alpha (317 aa).

Residues 1-234 form an alpha N-terminal domain (alpha-NTD) region; sequence MKQFVRPEFI…AHLEFFIDLN (234 aa). The alpha C-terminal domain (alpha-CTD) stretch occupies residues 249–317; that stretch reads DDKELDRTVE…ASLGLAFRQS (69 aa).

It belongs to the RNA polymerase alpha chain family. Homodimer. The RNAP catalytic core consists of 2 alpha, 1 beta, 1 beta' and 1 omega subunit. When a sigma factor is associated with the core the holoenzyme is formed, which can initiate transcription.

The enzyme catalyses RNA(n) + a ribonucleoside 5'-triphosphate = RNA(n+1) + diphosphate. In terms of biological role, DNA-dependent RNA polymerase catalyzes the transcription of DNA into RNA using the four ribonucleoside triphosphates as substrates. This is DNA-directed RNA polymerase subunit alpha from Mycoplasma capricolum subsp. capricolum (strain California kid / ATCC 27343 / NCTC 10154).